Here is a 357-residue protein sequence, read N- to C-terminus: Putative DNA directed RNA polymerase subunit R470 (357 aa).

It belongs to the archaeal Rpo11/eukaryotic RPB11/RPC19 RNA polymerase subunit family.

The protein localises to the virion. The catalysed reaction is RNA(n) + a ribonucleoside 5'-triphosphate = RNA(n+1) + diphosphate. This is Putative DNA directed RNA polymerase subunit R470 from Acanthamoeba polyphaga mimivirus (APMV).